The following is a 444-amino-acid chain: Probable glycine dehydrogenase (decarboxylating) subunit 1 (444 aa).

This sequence belongs to the GcvP family. N-terminal subunit subfamily. In terms of assembly, the glycine cleavage system is composed of four proteins: P, T, L and H. In this organism, the P 'protein' is a heterodimer of two subunits.

The enzyme catalyses N(6)-[(R)-lipoyl]-L-lysyl-[glycine-cleavage complex H protein] + glycine + H(+) = N(6)-[(R)-S(8)-aminomethyldihydrolipoyl]-L-lysyl-[glycine-cleavage complex H protein] + CO2. The glycine cleavage system catalyzes the degradation of glycine. The P protein binds the alpha-amino group of glycine through its pyridoxal phosphate cofactor; CO(2) is released and the remaining methylamine moiety is then transferred to the lipoamide cofactor of the H protein. This chain is Probable glycine dehydrogenase (decarboxylating) subunit 1, found in Moorella thermoacetica (strain ATCC 39073 / JCM 9320).